Here is a 939-residue protein sequence, read N- to C-terminus: UvrABC system protein A (939 aa).

32 to 39 (GLSGSGKS) serves as a coordination point for ATP. The segment at 252–279 (CPDCGISIGEISPSMFSFNAPFGKCDVC) adopts a C4-type zinc-finger fold. ABC transporter domains follow at residues 309–588 (WGEG…KESI) and 608–936 (AGKN…QYLK). 640-647 (GVSGSGKS) contacts ATP. The C4-type zinc finger occupies 739 to 765 (CEACKGDGIVRIEMQFLSDVYVPCDVC).

The protein belongs to the ABC transporter superfamily. UvrA family. In terms of assembly, forms a heterotetramer with UvrB during the search for lesions.

The protein resides in the cytoplasm. Functionally, the UvrABC repair system catalyzes the recognition and processing of DNA lesions. UvrA is an ATPase and a DNA-binding protein. A damage recognition complex composed of 2 UvrA and 2 UvrB subunits scans DNA for abnormalities. When the presence of a lesion has been verified by UvrB, the UvrA molecules dissociate. This Clostridium acetobutylicum (strain ATCC 824 / DSM 792 / JCM 1419 / IAM 19013 / LMG 5710 / NBRC 13948 / NRRL B-527 / VKM B-1787 / 2291 / W) protein is UvrABC system protein A.